Here is a 354-residue protein sequence, read N- to C-terminus: Tyrosine recombinase XerH (354 aa).

One can recognise a Core-binding (CB) domain in the interval 48–134; that stretch reads LTKGVKNIDE…AVINFFDFLD (87 aa). In terms of domain architecture, Tyr recombinase spans 163–346; it reads KLPEFMSKEE…DNDKLKLAAQ (184 aa). Residues arginine 205, lysine 231, histidine 298, arginine 301, and histidine 324 contribute to the active site. Tyrosine 333 serves as the catalytic O-(3'-phospho-DNA)-tyrosine intermediate.

It belongs to the 'phage' integrase family. XerH subfamily.

It is found in the cytoplasm. FtsK is required for efficient recombination. Its function is as follows. Site-specific tyrosine recombinase, which acts by catalyzing the cutting and rejoining of the recombining DNA molecules. Binds to the complete atypical dif motif (difH) site and to both halves separately. The chain is Tyrosine recombinase XerH from Campylobacter jejuni subsp. jejuni serotype O:2 (strain ATCC 700819 / NCTC 11168).